A 38-amino-acid polypeptide reads, in one-letter code: Photosystem II reaction center protein Y (38 aa).

Residues 4 to 22 (TIVVFAPIIAALAWVVFNI) traverse the membrane as a helical segment.

It belongs to the PsbY family. PSII is composed of 1 copy each of membrane proteins PsbA, PsbB, PsbC, PsbD, PsbE, PsbF, PsbH, PsbI, PsbJ, PsbK, PsbL, PsbM, PsbT, PsbX, PsbY, Psb30/Ycf12, peripheral proteins PsbO, CyanoQ (PsbQ), PsbU, PsbV and a large number of cofactors. It forms dimeric complexes.

It is found in the cellular thylakoid membrane. In terms of biological role, loosely associated component of the core of photosystem II (PSII), it is not always seen in crystals. PSII is a light-driven water plastoquinone oxidoreductase, using light energy to abstract electrons from H(2)O, generating a proton gradient subsequently used for ATP formation. The sequence is that of Photosystem II reaction center protein Y from Prochlorococcus marinus (strain MIT 9215).